The primary structure comprises 1670 residues: Protein TASOR (1670 aa).

The interval 1–110 is disordered; it reads MATAVETEAC…QIPRKSREKK (110 aa). Ala-2 is subject to N-acetylalanine. Over residues 67–78 the composition is skewed to polar residues; sequence QSLSHEQPQDSS. Ser-344 carries the post-translational modification Phosphoserine. Residue Lys-586 forms a Glycyl lysine isopeptide (Lys-Gly) (interchain with G-Cter in SUMO2) linkage. Phosphoserine is present on residues Ser-633, Ser-636, Ser-673, and Ser-800. Residues Lys-823 and Lys-832 each participate in a glycyl lysine isopeptide (Lys-Gly) (interchain with G-Cter in SUMO2) cross-link. Position 843 is a phosphoserine (Ser-843). A Glycyl lysine isopeptide (Lys-Gly) (interchain with G-Cter in SUMO2) cross-link involves residue Lys-872. The segment at 921–947 is disordered; the sequence is TGGNARSPEDQLGKHGEKQTPGMKSPE. 3 positions are modified to phosphoserine: Ser-927, Ser-971, and Ser-979. Basic and acidic residues predominate over residues 927-938; sequence SPEDQLGKHGEK. Thr-982 and Thr-1049 each carry phosphothreonine. Ser-1103 is modified (phosphoserine). Residues 1532–1545 show a composition bias toward basic and acidic residues; the sequence is ETKGSRGTDQKKNT. Disordered regions lie at residues 1532–1558 and 1638–1670; these read ETKG…VQNS and FLSA…SQEK. Composition is skewed to polar residues over residues 1546–1558 and 1659–1670; these read QIEL…VQNS and KSDSSRPYSQEK. At Ser-1552 the chain carries Phosphoserine.

The protein belongs to the TASOR family. As to quaternary structure, component of the HUSH complex; at least composed of TASOR, PPHLN1 and MPHOSPH8. Interacts with MORC2; the interaction associateS MORC2 with the HUSH complex which recruits MORC2 to heterochromatic loci. Interacts with ZNF638; leading to recruitment of the HUSH complex to unintegrated retroviral DNA. Interacts with INPP5A, EML1, SV1L, GPSM2, ITGB3BP, CNTN1, ETFA, PSMD8, S100A10, MPHOSPH8, TMEM100, ALB, PARPBP, HCFC2, NCBP1 and SETDB1.

Its subcellular location is the nucleus. It localises to the chromosome. Its function is as follows. Component of the HUSH complex, a multiprotein complex that mediates epigenetic repression. The HUSH complex is recruited to genomic loci rich in H3K9me3 and is required to maintain transcriptional silencing by promoting recruitment of SETDB1, a histone methyltransferase that mediates further deposition of H3K9me3, as well as MORC2. Also represses L1 retrotransposons in collaboration with MORC2 and, probably, SETDB1, the silencing is dependent of repressive epigenetic modifications, such as H3K9me3 mark. Silencing events often occur within introns of transcriptionally active genes, and lead to the down-regulation of host gene expression. The HUSH complex is also involved in the silencing of unintegrated retroviral DNA by being recruited by ZNF638: some part of the retroviral DNA formed immediately after infection remains unintegrated in the host genome and is transcriptionally repressed. Plays a crucial role in early embryonic development. Involved in the organization of spindle poles and spindle apparatus assembly during zygotic division. Plays an important role in maintaining epiblast fitness or potency. This Homo sapiens (Human) protein is Protein TASOR.